The sequence spans 395 residues: Elongation factor Tu (395 aa).

A tr-type G domain is found at 10–204 (KTHANIGTIG…AVDEYIPTPE (195 aa)). The G1 stretch occupies residues 19–26 (GHVDHGKT). 19-26 (GHVDHGKT) is a GTP binding site. Thr-26 provides a ligand contact to Mg(2+). The G2 stretch occupies residues 60-64 (GITIN). Residues 81 to 84 (DCPG) are G3. GTP is bound by residues 81-85 (DCPGH) and 136-139 (NKVD). The tract at residues 136 to 139 (NKVD) is G4. Residues 174–176 (SAL) form a G5 region.

The protein belongs to the TRAFAC class translation factor GTPase superfamily. Classic translation factor GTPase family. EF-Tu/EF-1A subfamily. In terms of assembly, monomer.

Its subcellular location is the cytoplasm. It carries out the reaction GTP + H2O = GDP + phosphate + H(+). In terms of biological role, GTP hydrolase that promotes the GTP-dependent binding of aminoacyl-tRNA to the A-site of ribosomes during protein biosynthesis. The chain is Elongation factor Tu from Macrococcus caseolyticus (strain JCSC5402) (Macrococcoides caseolyticum).